Here is a 389-residue protein sequence, read N- to C-terminus: Type 2 DNA topoisomerase 6 subunit A (389 aa).

In terms of domain architecture, Topo IIA-type catalytic spans 13-161 (KARLRAAEVM…MLILSKEKGK (149 aa)). The O-(5'-phospho-DNA)-tyrosine intermediate role is filled by Tyr107. The Mg(2+) site is built by Glu208 and Asp260.

It belongs to the TOP6A family. Homodimer. Heterotetramer of two Top6A and two Top6B chains. The cofactor is Mg(2+).

The enzyme catalyses ATP-dependent breakage, passage and rejoining of double-stranded DNA.. Functionally, relaxes both positive and negative superturns and exhibits a strong decatenase activity. The sequence is that of Type 2 DNA topoisomerase 6 subunit A from Aeropyrum pernix (strain ATCC 700893 / DSM 11879 / JCM 9820 / NBRC 100138 / K1).